Consider the following 310-residue polypeptide: Transcription initiation factor IIB (310 aa).

Residues 9 to 41 (EKETKCPECGSDDLRGDYERAEIVCGKCGLVID) form a TFIIB-type zinc finger. The Zn(2+) site is built by Cys14, Cys17, Cys33, and Cys36. Repeat copies occupy residues 127-210 (SELD…TREL) and 221-302 (DYVP…ELTE).

The protein belongs to the TFIIB family.

Its function is as follows. Stabilizes TBP binding to an archaeal box-A promoter. Also responsible for recruiting RNA polymerase II to the pre-initiation complex (DNA-TBP-TFIIB). This is Transcription initiation factor IIB from Methanothermobacter thermautotrophicus (strain ATCC 29096 / DSM 1053 / JCM 10044 / NBRC 100330 / Delta H) (Methanobacterium thermoautotrophicum).